The sequence spans 470 residues: tRNA-2-methylthio-N(6)-dimethylallyladenosine synthase (470 aa).

One can recognise an MTTase N-terminal domain in the interval 1-116; the sequence is MTYTVRTYGC…LPALLRRSRH (116 aa). [4Fe-4S] cluster contacts are provided by Cys10, Cys45, Cys79, Cys153, Cys157, and Cys160. The region spanning 139-369 is the Radical SAM core domain; the sequence is RESNYSAWVS…LDLQNRIALE (231 aa). The 68-residue stretch at 372-439 folds into the TRAM domain; it reads RKLIGKEVEL…PYHLIGDNAL (68 aa).

It belongs to the methylthiotransferase family. MiaB subfamily. As to quaternary structure, monomer. [4Fe-4S] cluster serves as cofactor.

The protein resides in the cytoplasm. The enzyme catalyses N(6)-dimethylallyladenosine(37) in tRNA + (sulfur carrier)-SH + AH2 + 2 S-adenosyl-L-methionine = 2-methylsulfanyl-N(6)-dimethylallyladenosine(37) in tRNA + (sulfur carrier)-H + 5'-deoxyadenosine + L-methionine + A + S-adenosyl-L-homocysteine + 2 H(+). Its function is as follows. Catalyzes the methylthiolation of N6-(dimethylallyl)adenosine (i(6)A), leading to the formation of 2-methylthio-N6-(dimethylallyl)adenosine (ms(2)i(6)A) at position 37 in tRNAs that read codons beginning with uridine. The chain is tRNA-2-methylthio-N(6)-dimethylallyladenosine synthase from Tropheryma whipplei (strain Twist) (Whipple's bacillus).